We begin with the raw amino-acid sequence, 566 residues long: Potassium-transporting ATPase potassium-binding subunit (566 aa).

The next 12 membrane-spanning stretches (helical) occupy residues 6–26 (VALLTSYMLVLLLLAWPLGIA), 60–80 (AAAILVFNLLGAALLFLLMLF), 128–148 (LGLTVHNFLSAANGIAVAFVL), 167–187 (IWRITVYLLLPLSVIYALFLA), 247–267 (LTNFVQMVSILLIPAALCICF), 276–296 (VGSALLWTMGIMLSVAALLIM), 331–351 (FGLWASSLFATITTAASCGAV), 361–381 (LGGLIPMVLMQLGEVVFGGVG), 383–403 (GWYGMMLFVFLTVFLAGLMIG), 423–443 (IGLLIPPALVLLGTALAVILP), 492–512 (LMFVGRFGVMLPVLAIAGALI), and 530–550 (LFVGMLIGVVLLIGALTFIPA).

Belongs to the KdpA family. The system is composed of three essential subunits: KdpA, KdpB and KdpC.

Its subcellular location is the cell inner membrane. In terms of biological role, part of the high-affinity ATP-driven potassium transport (or Kdp) system, which catalyzes the hydrolysis of ATP coupled with the electrogenic transport of potassium into the cytoplasm. This subunit binds the periplasmic potassium ions and delivers the ions to the membrane domain of KdpB through an intramembrane tunnel. The protein is Potassium-transporting ATPase potassium-binding subunit of Tolumonas auensis (strain DSM 9187 / NBRC 110442 / TA 4).